Reading from the N-terminus, the 201-residue chain is Recombination protein RecR (201 aa).

The C4-type zinc finger occupies 60 to 75 (CSCCGNVDTIDPCTVC). One can recognise a Toprim domain in the interval 83–178 (SMIIVVEDVS…KTTRLAHGVP (96 aa)).

The protein belongs to the RecR family.

In terms of biological role, may play a role in DNA repair. It seems to be involved in an RecBC-independent recombinational process of DNA repair. It may act with RecF and RecO. This is Recombination protein RecR from Allorhizobium ampelinum (strain ATCC BAA-846 / DSM 112012 / S4) (Agrobacterium vitis (strain S4)).